The sequence spans 345 residues: Histidinol-phosphate aminotransferase (345 aa).

The residue at position 206 (Lys206) is an N6-(pyridoxal phosphate)lysine.

The protein belongs to the class-II pyridoxal-phosphate-dependent aminotransferase family. Histidinol-phosphate aminotransferase subfamily. In terms of assembly, homodimer. The cofactor is pyridoxal 5'-phosphate.

It catalyses the reaction L-histidinol phosphate + 2-oxoglutarate = 3-(imidazol-4-yl)-2-oxopropyl phosphate + L-glutamate. Its pathway is amino-acid biosynthesis; L-histidine biosynthesis; L-histidine from 5-phospho-alpha-D-ribose 1-diphosphate: step 7/9. The protein is Histidinol-phosphate aminotransferase of Bacteroides fragilis (strain ATCC 25285 / DSM 2151 / CCUG 4856 / JCM 11019 / LMG 10263 / NCTC 9343 / Onslow / VPI 2553 / EN-2).